Here is a 117-residue protein sequence, read N- to C-terminus: Large ribosomal subunit protein uL18 (117 aa).

Belongs to the universal ribosomal protein uL18 family. Part of the 50S ribosomal subunit; part of the 5S rRNA/L5/L18/L25 subcomplex. Contacts the 5S and 23S rRNAs.

This is one of the proteins that bind and probably mediate the attachment of the 5S RNA into the large ribosomal subunit, where it forms part of the central protuberance. The protein is Large ribosomal subunit protein uL18 of Methylococcus capsulatus (strain ATCC 33009 / NCIMB 11132 / Bath).